A 295-amino-acid chain; its full sequence is MAKYTEDQLTSWTKPPSDSEQTKLENSEKMVREAISSDEKLSKKTIETFGQGSYANNTNVRLNSDIDINVKYSDGFYFDLPKDKSREDFGITLTSYSYEEYKDDVENALVNKFGRSEVVRKDKCITVKENSYRVETDVVPTWDYRRYSENGNYVQGTKFKTDKGIWIDNYPKQHIANGISKNNNTARRFKRLTRLHRKLRYKMIDDGGNVSDNITSFLLECLVWNVPNRIMNDYDTWTERLKQSIIYLYNNTREESSCKEWGEVSELLYLFHGGRKWTSKDVNSYMVLLWNHLEF.

Residues 1–28 form a disordered region; sequence MAKYTEDQLTSWTKPPSDSEQTKLENSE. Over residues 7-19 the composition is skewed to polar residues; it reads DQLTSWTKPPSDS. Residues glutamine 51 and serine 53 each coordinate UTP. Mg(2+) is bound at residue aspartate 67. Residues lysine 123, asparagine 169, arginine 197, phenylalanine 217, and lysine 276 each contribute to the UTP site. Residues 275–277 carry the Pyrimidine specificity motif (R/Q)xW in donor pocket motif; it reads RKW.

This sequence belongs to the CD-NTase family. E02 subfamily. In terms of assembly, monomer. Requires Mg(2+) as cofactor.

It carries out the reaction 2 UTP = c-di-UMP + 2 diphosphate. The enzyme catalyses UTP + CTP = cyclic CMP-UMP + 2 diphosphate. Functionally, cyclic nucleotide synthase (second messenger synthase) of a CBASS antivirus system. CBASS (cyclic oligonucleotide-based antiphage signaling system) provides immunity against bacteriophage. The CD-NTase protein synthesizes cyclic nucleotides in response to infection; these serve as specific second messenger signals. The signals activate a diverse range of effectors, leading to bacterial cell death and thus abortive phage infection. A type I-B(UU) CBASS system. The polypeptide is Cyclic dipyrimidine nucleotide synthase CdnE (Cecembia lonarensis (strain CCUG 58316 / KCTC 22772 / LW9)).